Here is a 409-residue protein sequence, read N- to C-terminus: 3-isopropylmalate dehydrogenase 1, chloroplastic (409 aa).

Residues Met-1–Cys-37 constitute a chloroplast transit peptide. The residue at position 74 (Ser-74) is a Phosphoserine. Ile-118–Glu-133 serves as a coordination point for NAD(+). Substrate contacts are provided by Arg-140, Arg-150, and Arg-178. An NAD(+)-binding site is contributed by Asn-238. Asp-268 contacts substrate. Asp-268 lines the Mg(2+) pocket. Asn-269 is a binding site for NAD(+). 2 residues coordinate Mg(2+): Asp-292 and Asp-296. Glu-322–Asn-338 contributes to the NAD(+) binding site.

It belongs to the isocitrate and isopropylmalate dehydrogenases family. As to quaternary structure, homodimer. Mg(2+) is required as a cofactor. The cofactor is Mn(2+). Highly expressed in seedlings, leaves, stems and roots and, to a lower extent, in flowers, pollen and siliques.

Its subcellular location is the plastid. The protein resides in the chloroplast stroma. The enzyme catalyses (2R,3S)-3-isopropylmalate + NAD(+) = 4-methyl-2-oxopentanoate + CO2 + NADH. It participates in amino-acid biosynthesis; L-leucine biosynthesis; L-leucine from 3-methyl-2-oxobutanoate: step 3/4. The protein operates within secondary metabolite biosynthesis. Its activity is regulated as follows. Regulated by a thiol-based redox modification; oxidation by CuCl(2) leads to a decreased activity. Involved in both glucosinolate and leucine biosynthesis; catalyzes the oxidative decarboxylation step in both leucine biosynthesis (primary metabolism) and methionine chain elongation of glucosinolates (specialized metabolism). Catalyzes the oxidation of 3-carboxy-2-hydroxy-4-methylpentanoate (3-isopropylmalate, 3-IPM) to 3-carboxy-4-methyl-2-oxopentanoate. The product decarboxylates to 4-methyl-2 oxopentanoate. Required during pollen development and involved in embryo sac development. More active on 3-isopropylmalate and NAD(+) than towards D-malate. This Arabidopsis thaliana (Mouse-ear cress) protein is 3-isopropylmalate dehydrogenase 1, chloroplastic.